Here is a 187-residue protein sequence, read N- to C-terminus: Probable RNA 2'-phosphotransferase (187 aa).

It belongs to the KptA/TPT1 family.

In terms of biological role, removes the 2'-phosphate from RNA via an intermediate in which the phosphate is ADP-ribosylated by NAD followed by a presumed transesterification to release the RNA and generate ADP-ribose 1''-2''-cyclic phosphate (APPR&gt;P). May function as an ADP-ribosylase. The protein is Probable RNA 2'-phosphotransferase of Pseudomonas syringae pv. tomato (strain ATCC BAA-871 / DC3000).